Here is a 369-residue protein sequence, read N- to C-terminus: Outer membrane protein P2 (369 aa).

An N-terminal signal peptide occupies residues M1–A20.

The protein belongs to the Gram-negative porin family. In terms of assembly, homotrimer.

The protein localises to the cell outer membrane. Forms pores that allow passive diffusion of small molecules across the outer membrane. The sequence is that of Outer membrane protein P2 (ompP2) from Haemophilus influenzae.